An 806-amino-acid polypeptide reads, in one-letter code: Minor extracellular protease Vpr (806 aa).

Positions 1–28 are cleaved as a signal peptide; that stretch reads MKKGIIRFLLVSFVLFFALSTGITGVQA. A propeptide spanning residues 29–160 is cleaved from the precursor; it reads APASSKTSAD…TISEDAVSPQ (132 aa). Positions 57 to 142 constitute an Inhibitor I9 domain; sequence TVIVELKEKS…AVYPNVTYKT (86 aa). In terms of domain architecture, Peptidase S8 spans 158–597; sequence SPQMDDSAPY…ARIMNAIKAD (440 aa). Active-site charge relay system residues include aspartate 189 and histidine 233. A PA domain is found at 383–461; sequence ELVEAGIGEA…KLSLEDGEKL (79 aa). Serine 534 (charge relay system) is an active-site residue.

This sequence belongs to the peptidase S8 family. In terms of processing, probably undergoes C-terminal processing or proteolysis. Auto-processed to form active enzymes of several different molecular weights.

The protein resides in the secreted. It is found in the cell wall. With respect to regulation, activity is inhibited by phenylmethylsulfonyl fluoride (PMSF), but not by EDTA. In terms of biological role, serine protease. Involved in the production of the competence and sporulation stimulating factor CSF. Is directly involved in the processing of pro-CSF to CSF. Can also cleave pro-PhrA to PhrA, but cannot cleave pro-PhrE. Shows fibrinolytic activity in vitro. Not essential for growth or sporulation. The sequence is that of Minor extracellular protease Vpr from Bacillus subtilis (strain 168).